Here is a 142-residue protein sequence, read N- to C-terminus: Large ribosomal subunit protein uL13 (142 aa).

Belongs to the universal ribosomal protein uL13 family. Part of the 50S ribosomal subunit.

This protein is one of the early assembly proteins of the 50S ribosomal subunit, although it is not seen to bind rRNA by itself. It is important during the early stages of 50S assembly. The chain is Large ribosomal subunit protein uL13 from Shewanella putrefaciens (strain CN-32 / ATCC BAA-453).